A 294-amino-acid chain; its full sequence is Mating type protein mtA-1 (294 aa).

Residues 46–101 constitute a DNA-binding region (alpha box); it reads TAKKKVNGFMGFRSNYSPLFSYLPQKMRSPFMTILWQYDPYHNEWDFMCSVYSSIR.

This sequence belongs to the MATALPHA1 family.

The protein localises to the nucleus. In terms of biological role, mating type proteins are sequence specific DNA-binding proteins that act as master switches in fungal differentiation by controlling gene expression in a cell type-specific fashion. Transcriptional activator that induces the transcription of alpha-specific genes. This is Mating type protein mtA-1 (MTA1) from Sordaria equina.